Here is a 574-residue protein sequence, read N- to C-terminus: Tyrosinase (574 aa).

6 residues coordinate Cu cation: H67, H95, H104, H275, H279, and H304. The 2'-(S-cysteinyl)-histidine (Cys-His) cross-link spans 93 to 95; sequence CTH.

This sequence belongs to the tyrosinase family. The cofactor is Cu(2+).

It carries out the reaction 2 L-dopa + O2 = 2 L-dopaquinone + 2 H2O. The enzyme catalyses L-tyrosine + O2 = L-dopaquinone + H2O. This is a copper-containing oxidase that functions in the formation of pigments such as melanins and other polyphenolic compounds. The sequence is that of Tyrosinase (TYR) from Podospora anserina (Pleurage anserina).